The following is a 356-amino-acid chain: Dihydroorotate dehydrogenase (quinone) (356 aa).

FMN-binding positions include 67 to 71 and Thr-91; that span reads PGFDK. Lys-71 is a binding site for substrate. 116–120 contacts substrate; it reads NRMGF. Asn-147 and Asn-178 together coordinate FMN. Asn-178 contributes to the substrate binding site. Ser-181 (nucleophile) is an active-site residue. Residue Asn-183 coordinates substrate. FMN contacts are provided by Lys-218 and Ser-246. Position 247–248 (247–248) interacts with substrate; sequence NT. FMN contacts are provided by residues Gly-268, Gly-297, and 318–319; that span reads YS.

Belongs to the dihydroorotate dehydrogenase family. Type 2 subfamily. Monomer. FMN is required as a cofactor.

It localises to the cell membrane. The catalysed reaction is (S)-dihydroorotate + a quinone = orotate + a quinol. It functions in the pathway pyrimidine metabolism; UMP biosynthesis via de novo pathway; orotate from (S)-dihydroorotate (quinone route): step 1/1. Its function is as follows. Catalyzes the conversion of dihydroorotate to orotate with quinone as electron acceptor. This Sphingopyxis alaskensis (strain DSM 13593 / LMG 18877 / RB2256) (Sphingomonas alaskensis) protein is Dihydroorotate dehydrogenase (quinone).